The chain runs to 306 residues: D-alanine--D-alanine ligase (306 aa).

Catalysis depends on residues Glu-15 and Ser-150. In terms of domain architecture, ATP-grasp spans 101 to 303 (KLLWKSLSLR…FDELILKILK (203 aa)). 134–189 (ILKLKFPVVIKPNNAGSSIGITIVNHPDLLIDSINLAFNYSNNIIIEKFLKGTEYT) is an ATP binding site. The Mg(2+) site is built by Asp-257, Glu-270, and Asn-272. Residue Ser-281 is part of the active site.

Belongs to the D-alanine--D-alanine ligase family. It depends on Mg(2+) as a cofactor. The cofactor is Mn(2+).

It is found in the cytoplasm. The catalysed reaction is 2 D-alanine + ATP = D-alanyl-D-alanine + ADP + phosphate + H(+). It functions in the pathway cell wall biogenesis; peptidoglycan biosynthesis. In terms of biological role, cell wall formation. The chain is D-alanine--D-alanine ligase from Buchnera aphidicola subsp. Schizaphis graminum (strain Sg).